Consider the following 285-residue polypeptide: MASEKPQESVYYLKPGDEERARLNNQHRVLVHIIENELLHAPIDPSTIVKIADVGTGTGIWLDALAAHLDPIPTAIGQPRQYDGLDMSPAHFPAFHPENFHYDVYNILQPVPEGLKGKYDLVHVRLLVSALSKGDVNTAVDNLAQLLRPGGWIQWDELDGESWAGRVPSAHVREMNELVRKHMETKGMELDVPAAFVKAAEAHPRLQNVSERIFNTIKSGPELKDDVNSVYLWSCTTSTKMILQASGTPGAEEEFKRLSEGAKADIERDGIFWDSDEHVLLAQKK.

The protein belongs to the methyltransferase superfamily. LaeA methyltransferase family.

Its pathway is secondary metabolite biosynthesis. Its function is as follows. Methyltransferase; part of the gene cluster that mediates the biosynthesis of gregatin A, a fungal polyketide featuring an alkylated furanone core. The PKS grgA synthesizes C11 and C4 polyketide chains in the presence and absence of the trans-enoyl reductase grgB, respectively. The polyketide transferase grgF is then responsible for the fusion of the two carbon chains to produce the furanone skeleton of gregatin A. Next, the cytochrome P450 monooxygenase grgG accepts performs the oxidative cyclization to furnish the gregatin scaffold and leads to the formation of desmethylgregatin A. Finally, the O-methyltransferase grgD methylates the carboxyl group of desmethylgregatin A to provide gregatin A. In Penicillium sp, this protein is Methyltransferase grgD.